Reading from the N-terminus, the 952-residue chain is Eukaryotic initiation factor 4F subunit p150 (952 aa).

Disordered stretches follow at residues 1 to 77, 115 to 389, and 481 to 575; these read MTDE…NYNG, GSAP…DAGT, and VIPP…LVPS. A compositionally biased stretch (polar residues) spans 7–16; it reads HPTQSASKQE. Over residues 29 to 46 the composition is skewed to low complexity; it reads ESQQQRGYTNYNNGSNYT. Over residues 47–56 the composition is skewed to polar residues; the sequence is QKKPYNSNRP. Residues 65-74 are compositionally biased toward low complexity; the sequence is GPNRYNNRGN. Residues 140–151 show a composition bias toward basic and acidic residues; it reads SGEHLDLKEQHK. The segment covering 154–166 has biased composition (polar residues); sequence LQSQERSTVSPQP. The residue at position 163 (Ser163) is a Phosphoserine. Positions 175–191 are enriched in low complexity; it reads DSTSTSTPTPTPSTNDS. Residue Thr181 is modified to Phosphothreonine. An interaction with PAB1 region spans residues 188 to 299; the sequence is TNDSKASSEE…KEESTPKVLT (112 aa). At Ser195 the chain carries Phosphoserine. The segment covering 218–228 has biased composition (basic and acidic residues); sequence AALEKKRKEQL. Positions 229-244 are enriched in polar residues; that stretch reads EGSSGNNNIPMKTTPE. Basic and acidic residues-rich tracts occupy residues 246 to 276, 283 to 294, and 309 to 333; these read VEEK…KQET, QGEKGQIKEEST, and QQKE…ETKS. Polar residues predominate over residues 355 to 368; it reads TEQSNIDESATTPA. A Phosphoserine modification is found at Ser503. Composition is skewed to basic and acidic residues over residues 504–521 and 532–569; these read RGHD…DRAN and RMND…KEEV. Residues 607–850 enclose the MIF4G domain; sequence ERKMKSLLNK…IDIKELRHDK (244 aa). Residues 870–952 are disordered; the sequence is EEERQRQLKN…ALMGESDDEE (83 aa). Over residues 879–894 the composition is skewed to low complexity; sequence NNSRSNSRRTNNSSNR. Ser883 is subject to Phosphoserine. A Phosphothreonine modification is found at Thr888. A phosphoserine mark is found at Ser892, Ser896, Ser908, and Ser948. Residues 908–922 show a composition bias toward polar residues; it reads SFITTRTYSQRNSQR.

It belongs to the eukaryotic initiation factor 4G family. Component of the eIF4F complex, which composition varies with external and internal environmental conditions. It is composed of at least eIF4A (TIF1/TIF2), eIF4E (TIF45) and eIF4G (TIF4631 or TIF4632). Interacts with PAT1 in a RNA-dependent manner.

It is found in the cytoplasm. It localises to the P-body. The protein localises to the stress granule. In terms of biological role, component of the eIF4F complex, which interacts with the mRNA cap structure and serves as an initial point of assembly for the translation apparatus. Stimulates translation by interaction with polyadenylate-binding protein PAB1, bringing the 5'- and 3'-ends of the mRNA in proximity. The formation of this circular mRNP structure appears to be critical for the synergistic effects of the cap and the poly(A) tail in facilitating translation initiation, recycling of ribosomes, and mRNA stability. TIF4631 is probably essential when TIF4632 is missing. This is Eukaryotic initiation factor 4F subunit p150 from Saccharomyces cerevisiae (strain ATCC 204508 / S288c) (Baker's yeast).